Consider the following 551-residue polypeptide: Dol-P-Man:Man(7)GlcNAc(2)-PP-Dol alpha-1,6-mannosyltransferase (551 aa).

At 1-2 (MR) the chain is on the lumenal side. Residues 3–23 (WSVLDTVLLTVISFHLIQAPF) form a helical membrane-spanning segment. Residues 24–61 (TKVEESFNIQAIHDILTYSVFDISQYDHLKFPGVVPRT) are Cytoplasmic-facing. A helical membrane pass occupies residues 62-82 (FVGAVIIAMLSRPYLYLSSLI). Topologically, residues 83-89 (QTSRPTS) are lumenal. Residues 90-110 (IDVQLVVRGIVGLTNGLSFIY) form a helical membrane-spanning segment. Residues 111-136 (LKNCLQDMFDEITEKKKEENEDKDIY) are Cytoplasmic-facing. Residues 137–157 (IYDSAGTWFLLFLIGSFHLMF) form a helical membrane-spanning segment. Over 158 to 178 (YSTRTLPNFVMTLPLTNVALG) the chain is Lumenal. A helical membrane pass occupies residues 179-199 (WVLLGRYNAAIFLSALVAIVF). Residues 200 to 202 (RLE) are Cytoplasmic-facing. The helical transmembrane segment at 203-223 (VSALSAGIALFSVIFKKISLF) threads the bilayer. The Lumenal segment spans residues 224–227 (DAIK). A helical transmembrane segment spans residues 228-248 (FGIFGLGLGSAISITVDSYFW). Over 249–275 (QEWCLPEVDGFLFNVVAGYASKWGVEP) the chain is Cytoplasmic. Residues 276–296 (VTAYFTHYLRMMFMPPTVLLL) form a helical membrane-spanning segment. Topologically, residues 297 to 303 (NYFGYKL) are lumenal. The helical transmembrane segment at 304–324 (APAKLKIVSLASLFHIIVLSF) threads the bilayer. Over 325–331 (QPHKEWR) the chain is Cytoplasmic. The chain crosses the membrane as a helical span at residues 332–352 (FIIYAVPSIMLLGATGAAHLW). Residues 353–365 (ENMKVKKITNVLC) lie on the Lumenal side of the membrane. A helical membrane pass occupies residues 366 to 386 (LAILPLSIMTSFFISMAFLYI). Residues 387–417 (SRMNYPGGEALTSFNDMIVEKNITNATVHIS) are Cytoplasmic-facing. Residues 418–438 (IPPCMTGVTLFGELNYGVYGI) traverse the membrane as a helical segment. Residues 439–551 (NYDKTENTTL…KRIKQDEKTD (113 aa)) are Lumenal-facing.

It belongs to the glycosyltransferase 22 family.

Its subcellular location is the endoplasmic reticulum membrane. It catalyses the reaction an alpha-D-Man-(1-&gt;2)-alpha-D-Man-(1-&gt;2)-alpha-D-Man-(1-&gt;3)-[alpha-D-Man-(1-&gt;2)-alpha-D-Man-(1-&gt;3)-alpha-D-Man-(1-&gt;6)]-beta-D-Man-(1-&gt;4)-beta-D-GlcNAc-(1-&gt;4)-alpha-D-GlcNAc-diphospho-di-trans,poly-cis-dolichol + a di-trans,poly-cis-dolichyl beta-D-mannosyl phosphate = an alpha-D-Man-(1-&gt;2)-alpha-D-Man-(1-&gt;2)-alpha-D-Man-(1-&gt;3)-[alpha-D-Man-(1-&gt;2)-alpha-D-Man-(1-&gt;3)-[alpha-D-Man-(1-&gt;6)]-alpha-D-Man-(1-&gt;6)]-beta-D-Man-(1-&gt;4)-beta-D-GlcNAc-(1-&gt;4)-alpha-D-GlcNAc-diphospho-di-trans,poly-cis-dolichol + a di-trans,poly-cis-dolichyl phosphate + H(+). Its pathway is protein modification; protein glycosylation. In terms of biological role, mannosyltransferase that operates in the biosynthetic pathway of dolichol-linked oligosaccharides, the glycan precursors employed in protein asparagine (N)-glycosylation. The assembly of dolichol-linked oligosaccharides begins on the cytosolic side of the endoplasmic reticulum membrane and finishes in its lumen. The sequential addition of sugars to dolichol pyrophosphate produces dolichol-linked oligosaccharides containing fourteen sugars, including two GlcNAcs, nine mannoses and three glucoses. Once assembled, the oligosaccharide is transferred from the lipid to nascent proteins by oligosaccharyltransferases. In the lumen of the endoplasmic reticulum, adds the eighth mannose residue in an alpha-1,6 linkage onto Man(7)GlcNAc(2)-PP-dolichol to produce Man(8)GlcNAc(2)-PP-dolichol. This chain is Dol-P-Man:Man(7)GlcNAc(2)-PP-Dol alpha-1,6-mannosyltransferase (ALG12), found in Saccharomyces cerevisiae (strain ATCC 204508 / S288c) (Baker's yeast).